The chain runs to 222 residues: Protein-L-isoaspartate O-methyltransferase (222 aa).

The active site involves Ser-70.

The protein belongs to the methyltransferase superfamily. L-isoaspartyl/D-aspartyl protein methyltransferase family.

Its subcellular location is the cytoplasm. It catalyses the reaction [protein]-L-isoaspartate + S-adenosyl-L-methionine = [protein]-L-isoaspartate alpha-methyl ester + S-adenosyl-L-homocysteine. Functionally, catalyzes the methyl esterification of L-isoaspartyl residues in peptides and proteins that result from spontaneous decomposition of normal L-aspartyl and L-asparaginyl residues. It plays a role in the repair and/or degradation of damaged proteins. The sequence is that of Protein-L-isoaspartate O-methyltransferase from Jannaschia sp. (strain CCS1).